The sequence spans 287 residues: Pyridoxal 5'-phosphate synthase subunit PdxS (287 aa).

Residue Asp-21 participates in D-ribose 5-phosphate binding. Residue Lys-78 is the Schiff-base intermediate with D-ribose 5-phosphate of the active site. Gly-150 is a D-ribose 5-phosphate binding site. Arg-162 contributes to the D-glyceraldehyde 3-phosphate binding site. D-ribose 5-phosphate-binding positions include Gly-211 and 232-233 (GS).

This sequence belongs to the PdxS/SNZ family. In the presence of PdxT, forms a dodecamer of heterodimers.

The enzyme catalyses aldehydo-D-ribose 5-phosphate + D-glyceraldehyde 3-phosphate + L-glutamine = pyridoxal 5'-phosphate + L-glutamate + phosphate + 3 H2O + H(+). It participates in cofactor biosynthesis; pyridoxal 5'-phosphate biosynthesis. Catalyzes the formation of pyridoxal 5'-phosphate from ribose 5-phosphate (RBP), glyceraldehyde 3-phosphate (G3P) and ammonia. The ammonia is provided by the PdxT subunit. Can also use ribulose 5-phosphate and dihydroxyacetone phosphate as substrates, resulting from enzyme-catalyzed isomerization of RBP and G3P, respectively. In Francisella philomiragia subsp. philomiragia (strain ATCC 25017 / CCUG 19701 / FSC 153 / O#319-036), this protein is Pyridoxal 5'-phosphate synthase subunit PdxS.